The primary structure comprises 86 residues: Neurotoxin LmNaTx1 (86 aa).

An N-terminal signal peptide occupies residues 1–18 (MKILIIFVIAITVVGVQS). One can recognise an LCN-type CS-alpha/beta domain in the interval 19–85 (KDGYPIYSTG…VWTYAENTCG (67 aa)). Disulfide bonds link C33–C84, C37–C58, C44–C65, and C48–C67. A Cysteine amide modification is found at C84.

The protein belongs to the long (4 C-C) scorpion toxin superfamily. Sodium channel inhibitor family. Beta subfamily. In terms of tissue distribution, expressed by the venom gland.

The protein localises to the secreted. Functionally, binds voltage-independently at site-4 of sodium channels (Nav) and shift the voltage of activation toward more negative potentials thereby affecting sodium channel activation and promoting spontaneous and repetitive firing. The protein is Neurotoxin LmNaTx1 of Lychas mucronatus (Chinese swimming scorpion).